The sequence spans 504 residues: Sucrose phosphorylase (504 aa).

Aspartate 50 serves as a coordination point for substrate. Sucrose contacts are provided by residues histidine 88, 190 to 192 (RLD), glutamate 232, 289 to 290 (HD), 342 to 345 (DLYQ), and arginine 399. The Nucleophile role is filled by aspartate 192. Glutamate 232 functions as the Proton donor in the catalytic mechanism.

The protein belongs to the glycosyl hydrolase 13 family. Sucrose phosphorylase subfamily. In terms of assembly, homodimer.

It catalyses the reaction sucrose + phosphate = D-fructose + alpha-D-glucose 1-phosphate. Catalyzes the reversible phosphorolysis of sucrose into alpha-D-glucose 1-phosphate (Glc1P) and D-fructose. Is involved in sucrose degradation. Also displays transglucosylation activity in vitro, by transferring the glucosyl moiety of Glc1P to a broad range of monomeric sugars, such as D- and L-arabinose, D- and L-arabitol, and xylitol. The sequence is that of Sucrose phosphorylase from Bifidobacterium adolescentis (strain ATCC 15703 / DSM 20083 / NCTC 11814 / E194a).